The sequence spans 355 residues: Probable nitronate monooxygenase (355 aa).

Residues Asn71, Gln175, Gly180, Gly218, and 237–240 contribute to the FMN site; that span reads QMGT.

This sequence belongs to the nitronate monooxygenase family. NMO class I subfamily. The cofactor is FMN.

It catalyses the reaction 3 propionate 3-nitronate + 3 O2 + H2O = 3 3-oxopropanoate + 2 nitrate + nitrite + H2O2 + 3 H(+). Functionally, nitronate monooxygenase that uses molecular oxygen to catalyze the oxidative denitrification of alkyl nitronates. Acts on propionate 3-nitronate (P3N), the presumed physiological substrate. Probably functions in the detoxification of P3N, a metabolic poison produced by plants and fungi as a defense mechanism. This Staphylococcus aureus (strain USA300) protein is Probable nitronate monooxygenase.